The sequence spans 113 residues: Cell cycle control protein 50C (113 aa).

At 1 to 34 the chain is on the cytoplasmic side; it reads MEERAQHCLSRLLDNSALKQQELPIHRLYFTARR. Residues 35-55 form a helical membrane-spanning segment; the sequence is VLFVFFATGIFCLCMGIILIL. Topologically, residues 56–113 are extracellular; sequence SARSTQEIEINYTRICANCAKLRENASNFDKECTCSIPFYLSGKMMVGEIQETRLTLH. Residue asparagine 66 is glycosylated (N-linked (GlcNAc...) asparagine).

This sequence belongs to the CDC50/LEM3 family. In terms of tissue distribution, specifically expressed in testis.

Its subcellular location is the membrane. In Homo sapiens (Human), this protein is Cell cycle control protein 50C.